Here is a 369-residue protein sequence, read N- to C-terminus: Delta(6)-protoilludene synthase STEHIDRAFT_73029 (369 aa).

Residues Asp-107, Asn-243, Ser-247, and Glu-251 each coordinate Mg(2+). Positions Asp-107–Asp-111 match the D(D/E)XX(D/E) motif motif. The NSE motif signature appears at Asn-243–Glu-251. The (2E,6E)-farnesyl diphosphate site is built by Arg-333 and Tyr-334.

It belongs to the terpene synthase family. It depends on Mg(2+) as a cofactor. Requires Mn(2+) as cofactor. Ca(2+) is required as a cofactor. Ni(2+) serves as cofactor. The cofactor is Co(2+).

It catalyses the reaction (2E,6E)-farnesyl diphosphate = Delta(6)-protoilludene + diphosphate. The catalysed reaction is (2E,6E)-farnesyl diphosphate = alpha-selinene + diphosphate. With respect to regulation, ca(2+) switches the cyclization mechanism of delta(6)-protoilludene synthase from 1,11 to 1,10 cyclization which leads to the production of beta-elemene. Terpene cyclase that catalyzes the cyclization of farnesyl diphosphate (FPP) to delta(6)-protoilludene. In presence of Ca(2+), a significant switch from 1,11 to a dual 1,11/1,10 cyclization occurs, producing beta-elemene as the major product, with lower levels of delta(6)-protoilludene and (E)-beta-caryophyllene, and traces of beta-selinene and alpha-selinene. This chain is Delta(6)-protoilludene synthase STEHIDRAFT_73029, found in Stereum hirsutum (strain FP-91666) (White-rot fungus).